Reading from the N-terminus, the 493-residue chain is Glutamyl-tRNA(Gln) amidotransferase subunit A (493 aa).

Active-site charge relay system residues include lysine 79 and serine 159. Serine 183 serves as the catalytic Acyl-ester intermediate.

It belongs to the amidase family. GatA subfamily. Heterotrimer of A, B and C subunits.

The enzyme catalyses L-glutamyl-tRNA(Gln) + L-glutamine + ATP + H2O = L-glutaminyl-tRNA(Gln) + L-glutamate + ADP + phosphate + H(+). Its function is as follows. Allows the formation of correctly charged Gln-tRNA(Gln) through the transamidation of misacylated Glu-tRNA(Gln) in organisms which lack glutaminyl-tRNA synthetase. The reaction takes place in the presence of glutamine and ATP through an activated gamma-phospho-Glu-tRNA(Gln). The chain is Glutamyl-tRNA(Gln) amidotransferase subunit A from Brucella ovis (strain ATCC 25840 / 63/290 / NCTC 10512).